We begin with the raw amino-acid sequence, 534 residues long: Prolyl 4-hydroxylase subunit alpha-2 (534 aa).

A signal peptide spans 1-21 (MKPWLCLVFFTSAFLIWHAEA). N115 carries N-linked (GlcNAc...) asparagine glycosylation. The TPR repeat unit spans residues 207 to 240 (VEILDYLSYAVFQFGDLHRAMELTRRLISLDSTH). N263 carries an N-linked (GlcNAc...) asparagine glycan. One can recognise a Fe2OG dioxygenase domain in the interval 413-519 (TAELLQVANY…KWVSNKWFHE (107 aa)). Fe cation contacts are provided by H431, D433, and H500. Residue K510 coordinates 2-oxoglutarate.

It belongs to the P4HA family. In terms of assembly, heterotetramer of two alpha-2 chains and two beta chains (the beta chain is the multi-functional PDI). The cofactor is Fe(2+). It depends on L-ascorbate as a cofactor.

Its subcellular location is the endoplasmic reticulum lumen. It carries out the reaction L-prolyl-[collagen] + 2-oxoglutarate + O2 = trans-4-hydroxy-L-prolyl-[collagen] + succinate + CO2. Functionally, catalyzes the post-translational formation of 4-hydroxyproline in -Xaa-Pro-Gly- sequences in collagens and other proteins. This Gallus gallus (Chicken) protein is Prolyl 4-hydroxylase subunit alpha-2 (P4HA2).